Here is a 351-residue protein sequence, read N- to C-terminus: ATP-dependent 6-phosphofructokinase subunit gamma (351 aa).

As to quaternary structure, heterododecamer of 4 alpha, 4 beta and 4 gamma chains. The gamma chain bridges the N-terminal halves of the alpha and beta subunits.

Its subcellular location is the cytoplasm. Its pathway is carbohydrate degradation; glycolysis; D-glyceraldehyde 3-phosphate and glycerone phosphate from D-glucose: step 3/4. Structural subunit of pyrophosphate--fructose 6-phosphate 1-phosphotransferase. Not required for catalytic activity. Fine-tunes allosteric regulation of the ATP-PFK by ATP, fructose 2,6-bisphosphate and AMP. The chain is ATP-dependent 6-phosphofructokinase subunit gamma (PFK3) from Komagataella phaffii (strain GS115 / ATCC 20864) (Yeast).